We begin with the raw amino-acid sequence, 613 residues long: Vitamin B12 transporter BtuB (613 aa).

Residues 1–22 form the signal peptide; that stretch reads MQKSLLAIAMASLLTPISYLHA. Residues 29-36 carry the TonB box motif; that stretch reads DTVVVTAN. Residues 41 to 154 form the TBDR plug domain; sequence VESSVLASIS…IGGVIHIKTI (114 aa). One can recognise a TBDR beta-barrel domain in the interval 159-613; it reads QTKHDANLGY…NWFATVNYRF (455 aa). The TonB C-terminal box motif lies at 591 to 613; the sequence is HSSGGKYYVGEGRNWFATVNYRF.

This sequence belongs to the TonB-dependent receptor family. BtuB (TC 1.B.14.3.1) subfamily.

Its subcellular location is the cell outer membrane. Involved in the active translocation of vitamin B12 (cyanocobalamin) across the outer membrane to the periplasmic space. It derives its energy for transport by interacting with the trans-periplasmic membrane protein TonB. The sequence is that of Vitamin B12 transporter BtuB from Vibrio vulnificus (strain YJ016).